A 510-amino-acid chain; its full sequence is uncharacterized protein (510 aa).

At 1-89 (MTSSLDDIEP…QGQRKKVLLK (89 aa)) the chain is on the lumenal side. Residues 38–76 (AVSQGVPDMDGQTTDSSKDPEPNSEDKKAFPPSSGSFFS) form a disordered region. The segment covering 53–66 (SSKDPEPNSEDKKA) has biased composition (basic and acidic residues). Residues 67-76 (FPPSSGSFFS) show a composition bias toward low complexity. A helical membrane pass occupies residues 90–110 (FVFTNCLLAIICFTMFVLFWG). At 111 to 123 (ALYDTSKYLHKVK) the chain is on the cytoplasmic side. Residues 124-144 (LLVVIQEPPVVILDNNSSMVV) traverse the membrane as a helical segment. The Lumenal portion of the chain corresponds to 145–312 (PSISYALPTF…TDRILLAPTQ (168 aa)). Residues 313-333 (IGVVYCLLLTFFQFLLYGPLH) form a helical membrane-spanning segment. Residues 334–349 (VEMAKVLRPANGLIYR) lie on the Cytoplasmic side of the membrane. Residues 350 to 370 (IAMSWFTFFFASLFFCTTTAI) form a helical membrane-spanning segment. The Lumenal segment spans residues 371-381 (FQVDFTKSFGR). Residues 382–402 (GGFVVYWMSTWLFMLAAGGAN) traverse the membrane as a helical segment. The Cytoplasmic segment spans residues 403-416 (ENAVMLVITLGPQY). A helical transmembrane segment spans residues 417 to 437 (LGFWILSFVILNIAPSFFPLA). Residues 438–474 (LNNNVYRYGYMMPVHNVIDIYRVIFFDVTRRKMGRNY) are Lumenal-facing. A helical membrane pass occupies residues 475-495 (GILVALIALNTALLPFVGKYA). Residues 496 to 510 (SRKLKQKALVAAKQS) lie on the Cytoplasmic side of the membrane.

It to yeast SNG1.

Its subcellular location is the endoplasmic reticulum membrane. This is an uncharacterized protein from Saccharomyces cerevisiae (strain ATCC 204508 / S288c) (Baker's yeast).